The chain runs to 344 residues: Anthranilate phosphoribosyltransferase (344 aa).

5-phospho-alpha-D-ribose 1-diphosphate contacts are provided by residues glycine 79, 82-83 (GD), threonine 87, 89-92 (NIST), 107-115 (KHGNRSVSS), and serine 119. Glycine 79 is a binding site for anthranilate. Serine 91 contributes to the Mg(2+) binding site. Asparagine 110 contributes to the anthranilate binding site. Arginine 165 contacts anthranilate. Residues aspartate 224 and glutamate 225 each contribute to the Mg(2+) site.

The protein belongs to the anthranilate phosphoribosyltransferase family. As to quaternary structure, homodimer. Mg(2+) is required as a cofactor.

It carries out the reaction N-(5-phospho-beta-D-ribosyl)anthranilate + diphosphate = 5-phospho-alpha-D-ribose 1-diphosphate + anthranilate. It functions in the pathway amino-acid biosynthesis; L-tryptophan biosynthesis; L-tryptophan from chorismate: step 2/5. In terms of biological role, catalyzes the transfer of the phosphoribosyl group of 5-phosphorylribose-1-pyrophosphate (PRPP) to anthranilate to yield N-(5'-phosphoribosyl)-anthranilate (PRA). This Salinibacter ruber (strain DSM 13855 / M31) protein is Anthranilate phosphoribosyltransferase.